Consider the following 387-residue polypeptide: Exodeoxyribonuclease 7 large subunit (387 aa).

Belongs to the XseA family. In terms of assembly, heterooligomer composed of large and small subunits.

Its subcellular location is the cytoplasm. The enzyme catalyses Exonucleolytic cleavage in either 5'- to 3'- or 3'- to 5'-direction to yield nucleoside 5'-phosphates.. In terms of biological role, bidirectionally degrades single-stranded DNA into large acid-insoluble oligonucleotides, which are then degraded further into small acid-soluble oligonucleotides. This chain is Exodeoxyribonuclease 7 large subunit, found in Campylobacter jejuni (strain RM1221).